A 185-amino-acid polypeptide reads, in one-letter code: Peptidyl-tRNA hydrolase (185 aa).

Tyr14 serves as a coordination point for tRNA. Residue His19 is the Proton acceptor of the active site. TRNA is bound by residues Phe64, Asn66, and Asn112.

This sequence belongs to the PTH family. Monomer.

The protein localises to the cytoplasm. It carries out the reaction an N-acyl-L-alpha-aminoacyl-tRNA + H2O = an N-acyl-L-amino acid + a tRNA + H(+). Its function is as follows. Hydrolyzes ribosome-free peptidyl-tRNAs (with 1 or more amino acids incorporated), which drop off the ribosome during protein synthesis, or as a result of ribosome stalling. In terms of biological role, catalyzes the release of premature peptidyl moieties from peptidyl-tRNA molecules trapped in stalled 50S ribosomal subunits, and thus maintains levels of free tRNAs and 50S ribosomes. The sequence is that of Peptidyl-tRNA hydrolase from Latilactobacillus sakei subsp. sakei (strain 23K) (Lactobacillus sakei subsp. sakei).